Consider the following 746-residue polypeptide: Exostosin-1 (746 aa).

The Cytoplasmic segment spans residues 1–7 (MQAKKRY). The chain crosses the membrane as a helical; Signal-anchor for type II membrane protein span at residues 8-28 (FILLSAGSCLALLFYFGGLQF). Residues 29 to 746 (RASRSHSRRE…RKKYRDIERL (718 aa)) are Lumenal-facing. An N-linked (GlcNAc...) asparagine glycan is attached at asparagine 89. 2 disulfides stabilise this stretch: cysteine 98/cysteine 103 and cysteine 109/cysteine 152. A protein contacts are provided by leucine 166 and tyrosine 203. Residues lysine 267, lysine 269, tyrosine 271, and arginine 280 each contribute to the UDP site. The cysteines at positions 298 and 312 are disulfide-linked. Histidine 300 contacts a protein. UDP contacts are provided by tyrosine 319 and tyrosine 324. Asparagine 330 carries an N-linked (GlcNAc...) asparagine glycan. 2 cysteine pairs are disulfide-bonded: cysteine 334–cysteine 355 and cysteine 652–cysteine 704. Residues arginine 346 and glutamate 349 each contribute to the UDP site.

The protein belongs to the glycosyltransferase 47 family. As to quaternary structure, part of the heparan sulfate polymerase, a dimeric complex composed of EXT1 and EXT2. Could also form homooligomeric complexes. Interacts with NDST1. N-glycosylated.

The protein resides in the golgi apparatus membrane. It is found in the golgi apparatus. Its subcellular location is the cis-Golgi network membrane. It localises to the endoplasmic reticulum membrane. The enzyme catalyses 3-O-{alpha-D-GlcNAc-[(1-&gt;4)-beta-D-GlcA-(1-&gt;4)-alpha-D-GlcNAc](n)-(1-&gt;4)-beta-D-GlcA-(1-&gt;3)-beta-D-Gal-(1-&gt;3)-beta-D-Gal-(1-&gt;4)-beta-D-Xyl}-L-seryl-[protein] + UDP-alpha-D-glucuronate = 3-O-{[(1-&gt;4)-beta-D-GlcA-(1-&gt;4)-alpha-D-GlcNAc](n+1)-(1-&gt;4)-beta-D-GlcA-(1-&gt;3)-beta-D-Gal-(1-&gt;3)-beta-D-Gal-(1-&gt;4)-beta-D-Xyl}-L-seryl-[protein] + UDP + H(+). It participates in protein modification; protein glycosylation. Glycosyltransferase forming with EXT2 the heterodimeric heparan sulfate polymerase which catalyzes the elongation of the heparan sulfate glycan backbone. Glycan backbone extension consists in the alternating transfer of (1-&gt;4)-beta-D-GlcA and (1-&gt;4)-alpha-D-GlcNAc residues from their respective UDP-sugar donors. Both EXT1 and EXT2 are required for the full activity of the polymerase since EXT1 bears the N-acetylglucosaminyl-proteoglycan 4-beta-glucuronosyltransferase activity within the complex while EXT2 carries the glucuronosyl-N-acetylglucosaminyl-proteoglycan 4-alpha-N-acetylglucosaminyltransferase activity. Heparan sulfate proteoglycans are ubiquitous components of the extracellular matrix and play an important role in tissue homeostasis and signaling. This is Exostosin-1 (EXT1) from Pongo abelii (Sumatran orangutan).